Consider the following 171-residue polypeptide: Photosystem I assembly protein Ycf3 (171 aa).

3 TPR repeats span residues 35-68 (AFTY…EIDP), 72-105 (SYIL…NPSL), and 120-153 (GEQA…APSN).

It belongs to the Ycf3 family.

Its subcellular location is the plastid. It localises to the chloroplast thylakoid membrane. Functionally, essential for the assembly of the photosystem I (PSI) complex. May act as a chaperone-like factor to guide the assembly of the PSI subunits. This is Photosystem I assembly protein Ycf3 from Angiopteris evecta (Mule's foot fern).